The sequence spans 374 residues: Alcohol dehydrogenase class-3 (374 aa).

A2 carries the post-translational modification N-acetylalanine. Zn(2+)-binding residues include C45, H67, C97, C100, C103, C111, and C174. Residue K233 is modified to N6-succinyllysine. A Phosphoserine modification is found at S247. K315 is subject to N6-succinyllysine. Phosphoserine occurs at positions 324 and 351.

Belongs to the zinc-containing alcohol dehydrogenase family. Class-III subfamily. In terms of assembly, homodimer. The cofactor is Zn(2+). Ubiquitous.

It localises to the cytoplasm. It carries out the reaction a primary alcohol + NAD(+) = an aldehyde + NADH + H(+). It catalyses the reaction a secondary alcohol + NAD(+) = a ketone + NADH + H(+). The catalysed reaction is S-(hydroxymethyl)glutathione + NADP(+) = S-formylglutathione + NADPH + H(+). The enzyme catalyses S-(hydroxymethyl)glutathione + NAD(+) = S-formylglutathione + NADH + H(+). It carries out the reaction 20-oxo-(5Z,8Z,11Z,14Z)-eicosatetraenoate + NAD(+) + H2O = (5Z,8Z,11Z,14Z)-eicosatetraenedioate + NADH + 2 H(+). It catalyses the reaction 20-hydroxy-(5Z,8Z,11Z,14Z)-eicosatetraenoate + NAD(+) = 20-oxo-(5Z,8Z,11Z,14Z)-eicosatetraenoate + NADH + H(+). The catalysed reaction is S-nitrosoglutathione + NADH + H(+) = S-(hydroxysulfenamide)glutathione + NAD(+). Functionally, catalyzes the oxidation of long-chain primary alcohols and the oxidation of S-(hydroxymethyl) glutathione. Also oxidizes long chain omega-hydroxy fatty acids, such as 20-HETE, producing both the intermediate aldehyde, 20-oxoarachidonate and the end product, a dicarboxylic acid, (5Z,8Z,11Z,14Z)-eicosatetraenedioate. Class-III ADH is remarkably ineffective in oxidizing ethanol. Required for clearance of cellular formaldehyde, a cytotoxic and carcinogenic metabolite that induces DNA damage. Also acts as a S-nitroso-glutathione reductase by catalyzing the NADH-dependent reduction of S-nitrosoglutathione, thereby regulating protein S-nitrosylation. This is Alcohol dehydrogenase class-3 from Mus musculus (Mouse).